A 516-amino-acid chain; its full sequence is Probable malate:quinone oxidoreductase (516 aa).

This sequence belongs to the MQO family. It depends on FAD as a cofactor.

It carries out the reaction (S)-malate + a quinone = a quinol + oxaloacetate. It participates in carbohydrate metabolism; tricarboxylic acid cycle; oxaloacetate from (S)-malate (quinone route): step 1/1. In Mycobacterium sp. (strain MCS), this protein is Probable malate:quinone oxidoreductase.